A 75-amino-acid polypeptide reads, in one-letter code: MPQLSRYSDEHVEQLLSDLLSVLEKHKAPTDLSLMVLGNMVTNLINTSVAPAQRQAIANSFTRALQSSISEDKAH.

Belongs to the UPF0352 family.

The sequence is that of UPF0352 protein YejL from Salmonella arizonae (strain ATCC BAA-731 / CDC346-86 / RSK2980).